The following is a 154-amino-acid chain: Endoribonuclease YbeY (154 aa).

Zn(2+)-binding residues include histidine 114, histidine 118, and histidine 124.

Belongs to the endoribonuclease YbeY family. Zn(2+) is required as a cofactor.

It is found in the cytoplasm. In terms of biological role, single strand-specific metallo-endoribonuclease involved in late-stage 70S ribosome quality control and in maturation of the 3' terminus of the 16S rRNA. The sequence is that of Endoribonuclease YbeY from Anaplasma phagocytophilum (strain HZ).